Reading from the N-terminus, the 261-residue chain is Hydroxyethylthiazole kinase (261 aa).

M39 contacts substrate. ATP is bound by residues R115 and T159. Residue G186 participates in substrate binding.

This sequence belongs to the Thz kinase family. The cofactor is Mg(2+).

It carries out the reaction 5-(2-hydroxyethyl)-4-methylthiazole + ATP = 4-methyl-5-(2-phosphooxyethyl)-thiazole + ADP + H(+). Its pathway is cofactor biosynthesis; thiamine diphosphate biosynthesis; 4-methyl-5-(2-phosphoethyl)-thiazole from 5-(2-hydroxyethyl)-4-methylthiazole: step 1/1. Functionally, catalyzes the phosphorylation of the hydroxyl group of 4-methyl-5-beta-hydroxyethylthiazole (THZ). This is Hydroxyethylthiazole kinase from Macrococcus caseolyticus (strain JCSC5402) (Macrococcoides caseolyticum).